Reading from the N-terminus, the 307-residue chain is Protease HtpX homolog 1 (307 aa).

2 consecutive transmembrane segments (helical) span residues 7–27 (LKTL…IITY) and 38–60 (IFTA…YLVG). A Zn(2+)-binding site is contributed by His133. Glu134 is a catalytic residue. His137 provides a ligand contact to Zn(2+). 2 helical membrane-spanning segments follow: residues 145-165 (IGMA…FLLF) and 180-200 (LILG…TFLL). A Zn(2+)-binding site is contributed by Glu212.

Belongs to the peptidase M48B family. Requires Zn(2+) as cofactor.

It localises to the cell membrane. The chain is Protease HtpX homolog 1 from Sulfolobus acidocaldarius (strain ATCC 33909 / DSM 639 / JCM 8929 / NBRC 15157 / NCIMB 11770).